A 382-amino-acid polypeptide reads, in one-letter code: Alcohol dehydrogenase 4 (382 aa).

This sequence belongs to the iron-containing alcohol dehydrogenase family. As to quaternary structure, homodimer. Zn(2+) serves as cofactor. It depends on Fe(2+) as a cofactor.

The protein localises to the mitochondrion. The enzyme catalyses a primary alcohol + NAD(+) = an aldehyde + NADH + H(+). It carries out the reaction a secondary alcohol + NAD(+) = a ketone + NADH + H(+). Inhibited by EDTA. In terms of biological role, reduces acetaldehyde to ethanol during glucose fermentation. Specific for ethanol. Shows drastically reduced activity towards primary alcohols from 4 carbon atoms upward. Isomers of aliphatic alcohol, as well as secondary alcohols and glycerol are not used at all. This Saccharomyces cerevisiae (strain YJM789) (Baker's yeast) protein is Alcohol dehydrogenase 4 (ADH4).